The chain runs to 576 residues: MGKNSKAIGNNHVKSVYQALLQSLKSKSVNGFSKITIETISFIKNLYPEIDSVTSKFDNSRPDQSKDLTLYLKSGETISLNLFLIKKGRRIQPKNAGAKSFLEKYFLSAEMQKIFNKEFERYYLDYLKEVVEHKKGTHYITDKRELKRLVSSHFPKFTEEINLYRDKFLFNLRETCFTLLQQFYNEKNIGFTHAFNVFFMVNDTNIITSYGKDENDVKVEKFAPASPSLKDIELYKTGKSTVGIKFGEVGLTLRFKFESDPWKSIKLATGYHEFPKEKERVNVNLKTMRRMEKLLNKHEYAKTSNNSNAIGKCHEAWTYYYFLKAFPDVIQVDPKQCVELINTYFSSINQNTLKKLYSSTSTIVDAITEKLRQKYHDYIIESIELIPDAYIKDRLDTGDLQLVLKVNNNIIVENISLKALAKRNSKITTKNPGMGSILGPTYFNMGSMESVINEVKNKFTIGEFNHRKSLEILSYEFGMKLDSATQEQLRRGIHNLLGKAMIAITIYGEGISFCKEPSEIDGEVKVHVNVPSAIQNTLTWNNELESISLRAKFSKSQKHGWSSIKLTSECQLESRK.

Monomer. It depends on Mg(2+) as a cofactor.

It carries out the reaction Endonucleolytic cleavage of DNA to give specific double-stranded fragments with terminal 5'-phosphates.. A P subtype restriction enzyme that recognizes the double-stranded sequence 5'-GGCC-3' and cleaves after G-2. In Bacillus subtilis, this protein is Type II restriction enzyme BsuRI (hsdRR).